Consider the following 156-residue polypeptide: Lipoprotein signal peptidase (156 aa).

The helical transmembrane segment at Gly-62–Ile-82 threads the bilayer. Active-site residues include Asp-115 and Asp-133. Residues Trp-126 to Met-146 traverse the membrane as a helical segment.

This sequence belongs to the peptidase A8 family.

It localises to the cell inner membrane. The catalysed reaction is Release of signal peptides from bacterial membrane prolipoproteins. Hydrolyzes -Xaa-Yaa-Zaa-|-(S,diacylglyceryl)Cys-, in which Xaa is hydrophobic (preferably Leu), and Yaa (Ala or Ser) and Zaa (Gly or Ala) have small, neutral side chains.. The protein operates within protein modification; lipoprotein biosynthesis (signal peptide cleavage). In terms of biological role, this protein specifically catalyzes the removal of signal peptides from prolipoproteins. This chain is Lipoprotein signal peptidase, found in Anaplasma phagocytophilum (strain HZ).